We begin with the raw amino-acid sequence, 490 residues long: Sporulation-specific protein 1 (490 aa).

The Protein kinase domain occupies 18–272 (YSIQSCIGRG…AYNLLSFEFV (255 aa)). Residues 24-32 (IGRGNFGDV) and Lys47 contribute to the ATP site. Asp141 serves as the catalytic Proton acceptor.

It belongs to the protein kinase superfamily. STE Ser/Thr protein kinase family. STE20 subfamily.

The protein localises to the nucleus. It localises to the cytoplasm. The enzyme catalyses L-seryl-[protein] + ATP = O-phospho-L-seryl-[protein] + ADP + H(+). The catalysed reaction is L-threonyl-[protein] + ATP = O-phospho-L-threonyl-[protein] + ADP + H(+). In terms of biological role, serine/threonine protein kinase required for spore wall development. The polypeptide is Sporulation-specific protein 1 (SPS1) (Saccharomyces cerevisiae (strain ATCC 204508 / S288c) (Baker's yeast)).